A 1051-amino-acid chain; its full sequence is MLPRKREIVAGEVEDLQKKTRAGEGEVTREEGDAAMAGRGNEIDEDLHSRQLAVYGRETMKRLFGSNVLVSGLQGLGAEIAKNLVLAGVKSVTLHDDGNVELWDLSSNFFLSENDVGQNRAQACVQKLQELNNAVLVSALTGDLTKEHLSKFQAVVFTDISLDKAIEFDDYCHSQQPPIAFIKSEVRGLFGSVFCDFGPEFTVLDVDGEEPHTGIVASISNDNPALVSCVDDERLEFQDGDLVVFSEVHGMTELNDGKPRKVKNARPYSFFLEEDTSSFGAYVRGGIVTQVKPPKVIKFKPLKEAMSEPGEFLMSDFSKFERPPLLHLAFQALDKFRTELSRFPVAGSTDDVQRVIEYAISINDTLGDRKLEEIDKKLLHHFASGSRAVLNPMAAMFGGIVGQEVVKACSGKFHPLYQFFYFDSVESLPVDPLEPGDLKPKNSRYDAQISVFGSKLQNKLEEAKIFMVGSGALGCEFLKNLALMGISCSQNGNLTLTDDDVIEKSNLSRQFLFRDWNIGQPKSTVAATAAMVINPKLHVEALQNRASPETENVFNDAFWENLDAVVNALDNVTARMYIDSRCVYFQKPLLESGTLGAKCNTQMVIPHLTENYGASRDPPEKQAPMCTVHSFPHNIDHCLTWARSEFEGLLEKTPTEVNAFLSNPTTYISAARTAGDAQARDQLERVIECLDRDKCETFQDSITWARLKFEDYFSNRVKQLTFTFPEDSMTSSGAPFWSAPKRFPRPVEFSSSDQSQLSFILAAAILRAETFGIPIPEWAKTPNKLAAEAVDKVIVPDFQPKQGVKIVTHEKATSLSSASVDDAAVIEELIAKLEEVSKTLPSGFHMNPIQFEKDDDTNFHMDVIAGFANMRARNYSIPEVDKLKAKFIAGRIIPAIATSTAMATGLVCLELYKALAGGHKVEDYRNTFANLAIPLFSIAEPVPPKTIKHQELSWTVWDRWTVTGNITLRELLEWLKEKGLNAYSISCGTSLLYNSMFPRHKERLDRKVVDVAREVAKMEVPSYRRHLDVVVACEDDDDNDVDIPLVSVYFR.

Repeat copies occupy residues 56–194 and 453–605. The tract at residues 56–605 is 2 approximate repeats; that stretch reads GRETMKRLFG…GAKCNTQMVI (550 aa). Residues Ala472, Asp498, Arg509, Lys522, and 570 to 571 each bind ATP; that span reads DN. Cys626 (glycyl thioester intermediate) is an active-site residue.

The protein belongs to the ubiquitin-activating E1 family. As to quaternary structure, monomer. The N-terminus is blocked.

The enzyme catalyses ATP + ubiquitin + [E1 ubiquitin-activating enzyme]-L-cysteine = AMP + diphosphate + S-ubiquitinyl-[E1 ubiquitin-activating enzyme]-L-cysteine.. Its pathway is protein modification; protein ubiquitination. Activates ubiquitin by first adenylating its C-terminal glycine residue with ATP, and thereafter linking this residue to the side chain of a cysteine residue in E1, yielding a ubiquitin-E1 thioester and free AMP. This Triticum aestivum (Wheat) protein is Ubiquitin-activating enzyme E1 1.